The following is a 314-amino-acid chain: Olfactory receptor 5P51 (314 aa).

The Extracellular segment spans residues 1 to 28 (MAFLEDGNHTAVTEFVLFGLTDDPVLRV). Asn8 carries N-linked (GlcNAc...) asparagine glycosylation. Residues 29–49 (ILFIIFLCIYLVNVSGNLSTI) form a helical membrane-spanning segment. Topologically, residues 50 to 57 (LLIRVSSQ) are cytoplasmic. The helical transmembrane segment at 58–78 (LHHPMYFFLSHLASVDVGYSS) threads the bilayer. Residues 79–102 (TVTPKMLANFLLERSTISYLGCTI) are Extracellular-facing. Residues Cys100 and Cys192 are joined by a disulfide bond. Residues 103–123 (QLFSGAFVGTLECFLLATMAY) form a helical membrane-spanning segment. The Cytoplasmic segment spans residues 124 to 136 (DRFIAICNPLLYS). The chain crosses the membrane as a helical span at residues 137–157 (TKMSTQVCIQLLVGSYIGGFL). Over 158–199 (NASSFLLSFFPLLFCGPNRVNHYSCDLTPLIELSCSGSNVPI) the chain is Extracellular. A helical transmembrane segment spans residues 200–220 (VPASFCSAFVIIVTVSVIAIS). The Cytoplasmic segment spans residues 221–240 (YTYILITILKMRSTEGRQKA). Residues 241-261 (FSTCTSHLTAVTLYYGTVTFI) traverse the membrane as a helical segment. At 262 to 274 (YVMPKSSYSTDQN) the chain is on the extracellular side. The helical transmembrane segment at 275–295 (KVVSVFYTVVIPMLNPIIYSL) threads the bilayer. The Cytoplasmic segment spans residues 296–314 (RNNEIKGALKRQLARKIFS).

Belongs to the G-protein coupled receptor 1 family.

The protein resides in the cell membrane. Functionally, potential odorant receptor. This Mus musculus (Mouse) protein is Olfactory receptor 5P51.